Here is a 447-residue protein sequence, read N- to C-terminus: Phosphoglucosamine mutase (447 aa).

The active-site Phosphoserine intermediate is the Ser-106. Positions 106, 245, 247, and 249 each coordinate Mg(2+). Ser-106 is subject to Phosphoserine.

The protein belongs to the phosphohexose mutase family. Requires Mg(2+) as cofactor. Activated by phosphorylation.

It carries out the reaction alpha-D-glucosamine 1-phosphate = D-glucosamine 6-phosphate. Catalyzes the conversion of glucosamine-6-phosphate to glucosamine-1-phosphate. The polypeptide is Phosphoglucosamine mutase (Cupriavidus metallidurans (strain ATCC 43123 / DSM 2839 / NBRC 102507 / CH34) (Ralstonia metallidurans)).